The chain runs to 247 residues: tRNA uridine(34) hydroxylase (247 aa).

One can recognise a Rhodanese domain in the interval 123 to 217 (ITKQDVIVDT…YLEDTQNKNN (95 aa)). Residue Cys177 is the Cysteine persulfide intermediate of the active site.

It belongs to the TrhO family.

It catalyses the reaction uridine(34) in tRNA + AH2 + O2 = 5-hydroxyuridine(34) in tRNA + A + H2O. Its function is as follows. Catalyzes oxygen-dependent 5-hydroxyuridine (ho5U) modification at position 34 in tRNAs. This chain is tRNA uridine(34) hydroxylase, found in Rickettsia bellii (strain RML369-C).